Consider the following 76-residue polypeptide: Small proline-rich protein 2F (76 aa).

Repeat copies occupy residues 21-29 (PKCPEPCSP), 30-38 (SVCPEPCPP), and 39-47 (PKCPEPCPE). Residues 21–47 (PKCPEPCSPSVCPEPCPPPKCPEPCPE) are 3 X 9 AA approximate tandem repeats. The disordered stretch occupies residues 53 to 76 (SFQQKCPPVQPPPPCQQKCPPKSK).

It belongs to the cornifin (SPRR) family. As to expression, expressed in uterus.

It is found in the cytoplasm. Functionally, cross-linked envelope protein of keratinocytes. It is a keratinocyte protein that first appears in the cell cytosol, but ultimately becomes cross-linked to membrane proteins by transglutaminase. All that results in the formation of an insoluble envelope beneath the plasma membrane. In Mus musculus (Mouse), this protein is Small proline-rich protein 2F (Sprr2f).